The chain runs to 156 residues: Cytochrome c-type biogenesis protein CcmE 1 (156 aa).

At 1 to 8 the chain is on the cytoplasmic side; it reads MNATRKQR. A helical; Signal-anchor for type II membrane protein transmembrane segment spans residues 9-29; sequence LWLVIGVLAAAALAVTLIVFA. The Periplasmic portion of the chain corresponds to 30-156; it reads LQRNMSYLFT…ATVAPLTAPR (127 aa). His-123 and Tyr-127 together coordinate heme.

This sequence belongs to the CcmE/CycJ family.

Its subcellular location is the cell inner membrane. Heme chaperone required for the biogenesis of c-type cytochromes. Transiently binds heme delivered by CcmC and transfers the heme to apo-cytochromes in a process facilitated by CcmF and CcmH. This chain is Cytochrome c-type biogenesis protein CcmE 1, found in Xanthomonas axonopodis pv. citri (strain 306).